A 244-amino-acid polypeptide reads, in one-letter code: Nonsense-mediated decay protein 4 (244 aa).

The protein localises to the cytoplasm. In terms of biological role, involved in nonsense-mediated decay of mRNAs containing premature stop codons. The chain is Nonsense-mediated decay protein 4 (NMD4) from Candida glabrata (strain ATCC 2001 / BCRC 20586 / JCM 3761 / NBRC 0622 / NRRL Y-65 / CBS 138) (Yeast).